A 114-amino-acid chain; its full sequence is Ig kappa chain V region AH80-5 (114 aa).

A framework-1 region spans residues 1-22 (IVMTQTPSSKSVPVGDTVTINC). The complementarity-determining-1 stretch occupies residues 23–35 (QAAQSVYSNNRLS). The framework-2 stretch occupies residues 36-50 (WFQQKPGQPPKGLIY). Residues 51-57 (YASTLAS) are complementarity-determining-2. The interval 58-93 (GVQQDPSRFKGSGSGTQFTLTISDVQCBBAATVYYC) is framework-3. The interval 94–103 (QGYKSSDTRA) is complementarity-determining-3. The interval 104-113 (FGGGTEVVVK) is framework-4.

This is Ig kappa chain V region AH80-5 from Oryctolagus cuniculus (Rabbit).